We begin with the raw amino-acid sequence, 109 residues long: Parvalbumin beta (109 aa).

2 EF-hand domains span residues 38–73 and 77–109; these read KSKDQLTKVFGVIDRDKSGYIEEDELKKFLQNFDGK and LTDKETAEFLKEGDTDGDGKIGVEEFVVLVTKG. Ca(2+) is bound by residues aspartate 51, aspartate 53, serine 55, tyrosine 57, glutamate 59, glutamate 62, aspartate 90, aspartate 92, aspartate 94, lysine 96, and glutamate 101.

Belongs to the parvalbumin family.

In terms of biological role, in muscle, parvalbumin is thought to be involved in relaxation after contraction. It binds two calcium ions. The sequence is that of Parvalbumin beta from Boa constrictor (Boa).